Here is a 1114-residue protein sequence, read N- to C-terminus: Hephaestin-like protein (1114 aa).

The first 26 residues, 1 to 26, serve as a signal peptide directing secretion; the sequence is MMDRSNAAFVLTACFIFSQLICHVAA. Plastocyanin-like domains follow at residues 27-210, 218-365, 380-562, 572-719, 730-915, and 924-1114; these read ITRT…LICR, QQSG…VTKC, KRTY…LLTC, TRKD…VNTC, KTRD…LIIC, and TEER…LLKA. The Extracellular portion of the chain corresponds to 27-1091; that stretch reads ITRTYYIAAV…KTTPKPITAA (1065 aa). Asn-121 carries N-linked (GlcNAc...) asparagine glycosylation. The Cu cation site is built by His-129, His-131, His-189, and His-191. An intrachain disulfide couples Cys-183 to Cys-209. N-linked (GlcNAc...) asparagine glycosylation occurs at Asn-236. Cys-284 and Cys-365 are disulfide-bonded. Residues His-303, Cys-346, and His-351 each contribute to the Cu cation site. 3 N-linked (GlcNAc...) asparagine glycosylation sites follow: Asn-361, Asn-478, and Asn-489. 2 disulfide bridges follow: Cys-536-Cys-562 and Cys-638-Cys-719. Residues His-657, Cys-700, His-705, and Met-710 each coordinate Cu cation. The N-linked (GlcNAc...) asparagine glycan is linked to Asn-831. Cys-889 and Cys-915 form a disulfide bridge. An N-linked (GlcNAc...) asparagine glycan is attached at Asn-944. His-1014, His-1017, His-1019, His-1059, Cys-1060, His-1061, His-1065, and Met-1070 together coordinate Cu cation. The chain crosses the membrane as a helical span at residues 1092-1112; the sequence is SSFVTSSIFIYLSFPVLAMLL. The Cytoplasmic portion of the chain corresponds to 1113-1114; sequence KA.

It belongs to the multicopper oxidase family. Requires Cu cation as cofactor. In terms of tissue distribution, component of the acid-insoluble and acid-soluble organic matrix of the aragonitic skeleton (at protein level).

It is found in the membrane. May function as a ferroxidase and may be involved in copper transport and homeostasis. The chain is Hephaestin-like protein from Acropora millepora (Staghorn coral).